Consider the following 348-residue polypeptide: Caricain (348 aa).

A signal peptide spans 1 to 16; the sequence is MAMIPSISKLLFVAIC. A propeptide spans 17–132 (activation peptide); sequence LFVHMSVSFG…EEFINEDTVN (116 aa). Residue Asn86 is glycosylated (N-linked (GlcNAc...) asparagine). Intrachain disulfides connect Cys154–Cys195, Cys188–Cys227, and Cys285–Cys336. Cys157 is a catalytic residue. Residue Cys157 coordinates E64. Residues His291 and Asn311 contribute to the active site.

The protein belongs to the peptidase C1 family. Monomer.

It catalyses the reaction Hydrolysis of proteins with broad specificity for peptide bonds, similar to those of papain and chymopapain.. Its activity is regulated as follows. Repressed by the active-site-directed cysteine protease inhibitor E64 (L-trans-epoxysuccinyl-leucylamide-(4-guanido)-butane) produced by Aspergillus japonicus. Functionally, cysteine proteinase with a high level of diversity in substrate specificity. The sequence is that of Caricain from Carica papaya (Papaya).